A 310-amino-acid polypeptide reads, in one-letter code: MFRFDKEQIVLDIAGTKIGGQPGEYPTVLAGTIFYGGHSIIEDEKAGVFDKDKAEALIKTQEEMSDVTGNPHIVQTFGQTPEAIVKYLEFVGDVTDAPFFIDSTSGEARIAGANYASEVGLEDRAIYNSVNMAADEAELEALKETKLSASIVLGFNPMDPTVDGKIGIWEDGAGTIDKGLLEMAAECGIDKYLMDVAVTPLGQGAGVAVRTSFAVKSKWGYPVGSGIHNVPSAWDWLREYKKDHKEAWPVCDVGSNLIQQMAGGDFVLYGPIENAKMAFPACAMADIFISEAAKDIGTEPVEDHPFFKLL.

Belongs to the MtrH family. In terms of assembly, the complex is composed of 8 subunits; MtrA, MtrB, MtrC, MtrD, MtrE, MtrF, MtrG and MtrH.

The enzyme catalyses 5-methyl-5,6,7,8-tetrahydromethanopterin + coenzyme M + 2 Na(+)(in) = 5,6,7,8-tetrahydromethanopterin + methyl-coenzyme M + 2 Na(+)(out). Its pathway is one-carbon metabolism; methanogenesis from CO(2); methyl-coenzyme M from 5,10-methylene-5,6,7,8-tetrahydromethanopterin: step 2/2. Part of a complex that catalyzes the formation of methyl-coenzyme M and tetrahydromethanopterin from coenzyme M and methyl-tetrahydromethanopterin. This is an energy-conserving, sodium-ion translocating step. MtrH catalyzes the transfer of the methyl group from methyl-tetrahydromethanopterin to the corrinoid prosthetic group of MtrA. The chain is Tetrahydromethanopterin S-methyltransferase subunit H from Methanothermobacter thermautotrophicus (strain ATCC 29096 / DSM 1053 / JCM 10044 / NBRC 100330 / Delta H) (Methanobacterium thermoautotrophicum).